Here is a 365-residue protein sequence, read N- to C-terminus: MRERKWEHVLACIWEDVESEESPLFDCVKIVHRALPELDFDDVDMEIELFGKRLSFPLIIAGMTGGHPKTGEINRKLARVARELEIGIGVGSQRAGVKDPEVRWTFEVVREEYPDGLVLANIGLPQLRENGPDLALEVVDMVDADALAVHVNVLQEAVQLEGEADAAGFVDVLAEVCETVDVPVVLKETGAGVSAEDAKLVRDIVDGIDVGGAGGTNWAVVEAVRSKAHGEIPLGYAFSDWGVPTAASILEVRSVVGNDLAIIGTGGVRTGMDVAKVLALGADCAGMALPVLRKVLAEGVRGCVRFLKSIAREVKIAMLMAGCSSVEEMSSVPIVVYGKLREWLECRGVPLDLVCTGDRRTGWNR.

Residue 4–5 participates in substrate binding; sequence RK. FMN-binding positions include 62–64, Ser92, and Asn121; that span reads GMT. 92-94 serves as a coordination point for substrate; that stretch reads SQR. Position 155 (Gln155) interacts with substrate. Mg(2+) is bound at residue Glu156. FMN-binding positions include Lys187, Thr216, 267–269, and 288–289; these read GVR and AL.

This sequence belongs to the IPP isomerase type 2 family. As to quaternary structure, homooctamer. Dimer of tetramers. FMN serves as cofactor. The cofactor is NADPH. It depends on Mg(2+) as a cofactor.

Its subcellular location is the cytoplasm. The enzyme catalyses isopentenyl diphosphate = dimethylallyl diphosphate. Its function is as follows. Involved in the biosynthesis of isoprenoids. Catalyzes the 1,3-allylic rearrangement of the homoallylic substrate isopentenyl (IPP) to its allylic isomer, dimethylallyl diphosphate (DMAPP). This is Isopentenyl-diphosphate delta-isomerase from Methanopyrus kandleri (strain AV19 / DSM 6324 / JCM 9639 / NBRC 100938).